The chain runs to 1466 residues: Collagen alpha-1(III) chain (1466 aa).

A signal peptide spans 1 to 23 (MMSFVQKGSWLLLALLHPTIILA). A propeptide spans 24–153 (QQEAVEGGCS…CPTGPQNYSP (130 aa)) (N-terminal propeptide). Residues 30 to 89 (GGCSHLGQSYADRDVWKPEPCQICVCDSGSVLCDDIICDDQELDCPNPEIPFGECCAVCP) form the VWFC domain. Residues 95-1194 (PTRPPNGQGP…GPPGPPGAPG (1100 aa)) are disordered. Low complexity predominate over residues 99 to 108 (PNGQGPQGPK). Positions 146-155 (TGPQNYSPQY) are enriched in polar residues. The nonhelical region (N-terminal) stretch occupies residues 149 to 167 (QNYSPQYDSYDVKSGVAVG). A triple-helical region region spans residues 168–1196 (GLAGYPGPAG…PGPPGAPGPC (1029 aa)). A 4-hydroxyproline mark is found at Pro-173, Pro-179, Pro-182, Pro-185, Pro-191, Pro-194, Pro-197, Pro-203, Pro-206, Pro-215, Pro-218, Pro-236, Pro-239, Pro-245, Pro-248, Pro-257, and Pro-260. Residues 175–185 (PAGPPGPPGPP) are compositionally biased toward pro residues. The segment covering 187 to 199 (TSGHPGSPGSPGY) has biased composition (low complexity). The segment covering 229-241 (KDGESGRPGRPGE) has biased composition (basic and acidic residues). Low complexity predominate over residues 251-260 (KGPAGIPGFP). Lys-263 carries the post-translational modification 5-hydroxylysine; alternate. Lys-263 carries an O-linked (Gal...) hydroxylysine; alternate glycan. Residues 266-277 (RGFDGRNGEKGE) show a composition bias toward basic and acidic residues. Pro-281 is modified (4-hydroxyproline). Residue Lys-284 is modified to 5-hydroxylysine. 4-hydroxyproline occurs at positions 290, 296, 305, 311, 314, 332, 335, 338, 344, 347, 359, 365, 371, 383, 386, 392, 404, 407, 416, 425, 434, 443, 455, 458, 470, 473, 479, 488, 500, 512, 524, 530, 533, 539, 542, 545, 551, 554, 563, 566, 575, 581, 590, 599, 602, 608, 620, 635, 644, 650, 656, 659, 661, 668, 671, 680, 686, 692, 701, 703, 713, 716, 722, 728, 737, 746, 749, 755, 770, 776, 785, 788, 797, 806, 812, 815, 821, 830, 839, 845, and 854. Positions 311-322 (PGLPGAAGARGN) are enriched in low complexity. Positions 355–380 (PAGSPGSNGAPGQRGEPGPQGHAGAQ) are enriched in low complexity. Positions 390–399 (GSPGGKGEMG) are enriched in gly residues. Residues 404–425 (PGAPGLMGARGPPGPAGANGAP) show a composition bias toward low complexity. Over residues 426-435 (GLRGGAGEPG) the composition is skewed to gly residues. Low complexity predominate over residues 478–523 (LPGAAGERGAPGFRGPAGPNGIPGEKGPAGERGAPGPAGPRGAAGE). Positions 528 to 549 (GVPGGPGMRGMPGSPGGPGSDG) are enriched in gly residues. Residues 642-651 (GLPGTGGPPG) show a composition bias toward gly residues. Over residues 669-678 (GAPGGKGDAG) the composition is skewed to gly residues. Low complexity predominate over residues 679 to 692 (APGERGPPGLAGAP). Over residues 693–711 (GLRGGAGPPGPEGGKGAAG) the composition is skewed to gly residues. The segment covering 729 to 738 (GERGGLGSPG) has biased composition (gly residues). Low complexity predominate over residues 787–796 (LPGIAGPRGS). Residues 823-835 (GKGERGAPGEKGE) show a composition bias toward basic and acidic residues. Residues 836–850 (GGPPGVAGPPGGSGP) show a composition bias toward gly residues. Lys-860 carries the post-translational modification 5-hydroxylysine. The span at 864–873 (GSPGGPGAAG) shows a compositional bias: gly residues. Pro-866, Pro-869, Pro-875, Pro-881, Pro-884, Pro-890, Pro-892, Pro-899, Pro-905, Pro-914, Pro-917, Pro-929, Pro-935, Pro-941, and Pro-944 each carry 4-hydroxyproline. Residues 890–907 (PGPPGPSGSPGKDGPPGP) are compositionally biased toward pro residues. Positions 908–917 (AGNTGAPGSP) are enriched in low complexity. The span at 946-961 (PLGIAGITGARGLAGP) shows a compositional bias: low complexity. A 4-hydroxyproline mark is found at Pro-962, Pro-965, and Pro-971. Lys-977 carries the 5-hydroxylysine modification. Residues Pro-983, Pro-995, Pro-1001, Pro-1010, Pro-1016, Pro-1022, Pro-1028, Pro-1040, Pro-1043, Pro-1046, Pro-1049, Pro-1052, Pro-1076, and Pro-1085 each carry the 4-hydroxyproline modification. A compositionally biased stretch (pro residues) spans 1046 to 1055 (PGHPGPPGPV). The span at 1067 to 1085 (SGPAGPAGAPGPAGSRGAP) shows a compositional bias: low complexity. Lys-1106 is modified (5-hydroxylysine). A 4-hydroxyproline mark is found at Pro-1112, Pro-1115, Pro-1118, Pro-1121, Pro-1133, Pro-1148, Pro-1157, Pro-1163, Pro-1178, Pro-1181, Pro-1184, Pro-1187, Pro-1190, and Pro-1193. Low complexity predominate over residues 1123 to 1133 (PAGQQGAIGSP). Residues 1181–1193 (PGQPGPPGPPGAP) show a composition bias toward pro residues. A nonhelical region (C-terminal) region spans residues 1197–1205 (CGGVGAAAI). The propeptide at 1222–1466 (DEPMDFKINT…GVDVGPVCFL (245 aa)) is C-terminal propeptide. One can recognise a Fibrillar collagen NC1 domain in the interval 1232 to 1466 (DEIMTSLKSV…GVDVGPVCFL (235 aa)). Intrachain disulfides connect Cys-1262–Cys-1294, Cys-1302–Cys-1464, and Cys-1372–Cys-1417. Asp-1280, Asn-1282, Gln-1283, Cys-1285, and Asp-1288 together coordinate Ca(2+).

It belongs to the fibrillar collagen family. As to quaternary structure, trimers of identical alpha 1(III) chains. The chains are linked to each other by interchain disulfide bonds. Trimers are also cross-linked via hydroxylysines. Interacts with ADGRG1. Proline residues at the third position of the tripeptide repeating unit (G-X-Y) are hydroxylated in some or all of the chains. Post-translationally, O-linked glycan consists of a Glc-Gal disaccharide bound to the oxygen atom of a post-translationally added hydroxyl group.

Its subcellular location is the secreted. The protein resides in the extracellular space. It is found in the extracellular matrix. In terms of biological role, collagen type III occurs in most soft connective tissues along with type I collagen. Involved in regulation of cortical development. Is the major ligand of ADGRG1 in the developing brain and binding to ADGRG1 inhibits neuronal migration and activates the RhoA pathway by coupling ADGRG1 to GNA13 and possibly GNA12. The sequence is that of Collagen alpha-1(III) chain (COL3A1) from Homo sapiens (Human).